A 365-amino-acid polypeptide reads, in one-letter code: tRNA(Met) cytidine acetate ligase (365 aa).

Residues 7–20 (IAEF…HKYL), G96, N152, and R175 contribute to the ATP site.

It belongs to the TmcAL family.

It localises to the cytoplasm. The catalysed reaction is cytidine(34) in elongator tRNA(Met) + acetate + ATP = N(4)-acetylcytidine(34) in elongator tRNA(Met) + AMP + diphosphate. Its function is as follows. Catalyzes the formation of N(4)-acetylcytidine (ac(4)C) at the wobble position of elongator tRNA(Met), using acetate and ATP as substrates. First activates an acetate ion to form acetyladenylate (Ac-AMP) and then transfers the acetyl group to tRNA to form ac(4)C34. This Streptococcus pneumoniae serotype 19F (strain G54) protein is tRNA(Met) cytidine acetate ligase.